We begin with the raw amino-acid sequence, 262 residues long: Probable ketoamine kinase TTHA1179 (262 aa).

Residue alanine 79–leucine 81 coordinates ATP. Aspartate 172 acts as the Proton acceptor in catalysis.

This sequence belongs to the fructosamine kinase family.

The catalysed reaction is N(6)-(D-ribulosyl)-L-lysine + ATP = N(6)-(3-O-phospho-D-ribulosyl)-L-lysine + ADP + H(+). It carries out the reaction N(6)-(D-erythrulosyl)-L-lysine + ATP = N(6)-(3-O-phospho-D-erythrulosyl)-L-lysine + ADP + H(+). The enzyme catalyses N(6)-D-ribulosyl-L-lysyl-[protein] + ATP = N(6)-(3-O-phospho-D-ribulosyl)-L-lysyl-[protein] + ADP + H(+). It catalyses the reaction N(6)-(D-erythrulosyl)-L-lysyl-[protein] + ATP = N(6)-(3-O-phospho-D-erythrulosyl)-L-lysyl-[protein] + ADP + H(+). Ketoamine kinase that phosphorylates ketoamines, such as erythruloselysine and ribuloselysine, on the third carbon of the sugar moiety to generate ketoamine 3-phosphate. Has higher activity on free lysine (erythruloselysine and ribuloselysine), than on ribuloselysine and erythruloselysine residues on glycated proteins. The protein is Probable ketoamine kinase TTHA1179 of Thermus thermophilus (strain ATCC 27634 / DSM 579 / HB8).